The primary structure comprises 303 residues: Probable 5-dehydro-4-deoxyglucarate dehydratase (303 aa).

The protein belongs to the DapA family.

It carries out the reaction 5-dehydro-4-deoxy-D-glucarate + H(+) = 2,5-dioxopentanoate + CO2 + H2O. It participates in carbohydrate acid metabolism; D-glucarate degradation; 2,5-dioxopentanoate from D-glucarate: step 2/2. This chain is Probable 5-dehydro-4-deoxyglucarate dehydratase, found in Pseudomonas savastanoi pv. phaseolicola (strain 1448A / Race 6) (Pseudomonas syringae pv. phaseolicola (strain 1448A / Race 6)).